We begin with the raw amino-acid sequence, 355 residues long: Erythronate-4-phosphate dehydrogenase (355 aa).

The substrate site is built by serine 45 and threonine 66. Position 146 (aspartate 146) interacts with NAD(+). The active site involves arginine 206. An NAD(+)-binding site is contributed by aspartate 229. Residue glutamate 234 is part of the active site. Residue histidine 251 is the Proton donor of the active site. Glycine 254 serves as a coordination point for NAD(+). Tyrosine 255 lines the substrate pocket.

Belongs to the D-isomer specific 2-hydroxyacid dehydrogenase family. PdxB subfamily. As to quaternary structure, homodimer.

It is found in the cytoplasm. The enzyme catalyses 4-phospho-D-erythronate + NAD(+) = (R)-3-hydroxy-2-oxo-4-phosphooxybutanoate + NADH + H(+). Its pathway is cofactor biosynthesis; pyridoxine 5'-phosphate biosynthesis; pyridoxine 5'-phosphate from D-erythrose 4-phosphate: step 2/5. In terms of biological role, catalyzes the oxidation of erythronate-4-phosphate to 3-hydroxy-2-oxo-4-phosphonooxybutanoate. The protein is Erythronate-4-phosphate dehydrogenase of Acinetobacter baumannii (strain AB307-0294).